The sequence spans 400 residues: Subtilisin-like protease 7 (400 aa).

The N-terminal stretch at 1 to 20 (MGFITKAIPLALAAASVING) is a signal peptide. Positions 21 to 119 (AEILETRAGV…IERDARVQIN (99 aa)) are excised as a propeptide. The region spanning 36 to 118 (KYIVVMNDGI…YIERDARVQI (83 aa)) is the Inhibitor I9 domain. Residues 129–400 (SWGLARVGSK…SKLINNGSGM (272 aa)) form the Peptidase S8 domain. Catalysis depends on charge relay system residues D161 and H192. Residues N222 and N252 are each glycosylated (N-linked (GlcNAc...) asparagine). Catalysis depends on S346, which acts as the Charge relay system. N-linked (GlcNAc...) asparagine glycosylation occurs at N396.

The protein belongs to the peptidase S8 family.

It is found in the secreted. In terms of biological role, secreted subtilisin-like serine protease with keratinolytic activity that contributes to pathogenicity. The protein is Subtilisin-like protease 7 (SUB7) of Trichophyton soudanense.